The primary structure comprises 560 residues: Tudor and KH domain-containing protein (560 aa).

KH domains lie at 52–115 (DIEI…KAAI) and 124–190 (PVFE…KHLI). Residues Lys-65, Lys-76, Lys-110, Lys-112, Lys-152, Lys-175, Lys-181, Lys-187, and Lys-193 each participate in a glycyl lysine isopeptide (Lys-Gly) (interchain with G-Cter in ubiquitin) cross-link. A disordered region spans residues 211–230 (RVPRKQPISVRREEVTEPGG). Residues Lys-256 and Lys-267 each participate in a glycyl lysine isopeptide (Lys-Gly) (interchain with G-Cter in ubiquitin) cross-link. A disordered region spans residues 268-291 (EGSWEKPNDDSFQNSGAQSSPETS). Residues 277–290 (DSFQNSGAQSSPET) show a composition bias toward polar residues. Ser-278 bears the Phosphoserine mark. In terms of domain architecture, Tudor spans 353–412 (TVHVGDIVAAPLSTNGSWYRARVLGTLENGNLDLYFVDFGDNGDCALKDLRALRSDFLSL). Glycyl lysine isopeptide (Lys-Gly) (interchain with G-Cter in ubiquitin) cross-links involve residues Lys-479, Lys-510, and Lys-529.

The protein belongs to the Tdrkh family. Interacts with (symmetrically methylated) PIWIL1, PIWIL2 and PIWIL4. Post-translationally, ubiquitinated by PRKN during mitophagy, leading to its degradation and enhancement of mitophagy. Deubiquitinated by USP30. As to expression, highly expressed in testis, present at lower level in brain. Weakly or not expressed in other tissues (at protein level).

Its subcellular location is the cytoplasm. It localises to the mitochondrion. In terms of biological role, participates in the primary piRNA biogenesis pathway and is required during spermatogenesis to repress transposable elements and prevent their mobilization, which is essential for the germline integrity. The piRNA metabolic process mediates the repression of transposable elements during meiosis by forming complexes composed of piRNAs and Piwi proteins and govern the methylation and subsequent repression of transposons. Required for the final steps of primary piRNA biogenesis by participating in the processing of 31-37 nt intermediates into mature piRNAs. May act in pi-bodies and piP-bodies by transferring piRNA precursors or intermediates to or between these granules. In Mus musculus (Mouse), this protein is Tudor and KH domain-containing protein (Tdrkh).